Consider the following 312-residue polypeptide: Polyprenyl transferase atnF (312 aa).

N-linked (GlcNAc...) asparagine glycosylation occurs at Asn9. The next 9 membrane-spanning stretches (helical) occupy residues 30-50, 64-84, 111-131, 132-152, 154-174, 185-205, 229-249, 255-275, and 288-308; these read LHTI…FFYA, FIGI…WNDI, AMWV…WLLG, ADVT…PLCK, IIWA…LPPW, GLLP…LDLI, YLKA…VLAA, GFLL…WSIM, and IFLV…LNVS.

This sequence belongs to the UbiA prenyltransferase family. Mg(2+) is required as a cofactor.

Its subcellular location is the membrane. It participates in secondary metabolite biosynthesis; terpenoid biosynthesis. Its function is as follows. Polyprenyl transferase; part of the gene cluster that mediates the biosynthesis of the meroterpenoids arthripenoids. The pathway begins with the HR-PKS atnH that catalyzes two chain-extension steps to form a reduced triketide, which then primes the SAT domain in the NR-PKS atnG to initiate three more cycles of extension to give a linear hexaketide corresponding to the polyketide part of arthripenoids. The FAD-dependent monooxygenase atnJ then performs an oxidative decarboxylation at C11 of the atnH/atnG product, via an electrophilic aromatic hydroxylation with concomitant ipso-decarboxylation. The membrane-bound polyprenyl transferase atnF then introduces a farnesyl group before the FAD-dependent monooxygenase atnK functions as the first epoxidase on terminal C12'-C13' olefin, followed by a second epoxidation on C7'-C8' catalyzed by atnA. The terpene cyclase/mutase atnI then initiates the sequential tricyclic ring formation through protonation of the terminal epoxide and catalyzes the regioselective and stereoselective 6/6/6-tricyclic ring formation. The cytochrome P450 monooxygenase atnM is responsible for hydroxylating both C1' and C10'. The next steps may involve ketoreduction and acetyl transfer by the ketoreductase atnB and the acetyltransferase atnC, and lead to the production of arthripenoid B, the final biosynthetic product of the atn cluster. The hydroquinone moiety in arthripenoid B is prone to undergo spontaneous oxidation to afford a benzoquinone compound, a key intermediate for generating structure diversity. For instance, addition of a cysteine followed by ring contraction gives arthripenoid A, tautomerization gives the main product arthripenoid C, addition of a molecular of water or amine affords arthripenoid D or E, respectively, and loss of one water forms arthripenoid F. The sequence is that of Polyprenyl transferase atnF from Arthrinium sp.